Reading from the N-terminus, the 299-residue chain is Apolipoprotein E (299 aa).

The N-terminal stretch at 1-18 (MKVLWAVLVVTLLAGCRA) is a signal peptide. A run of 7 repeats spans residues 74–95 (LLME…QELA), 96–117 (PMAE…ARLG), 118–139 (ADME…AMLG), 140–161 (QSAE…KRLL), 162–183 (RDAE…EGAE), 184–205 (RGVS…LRSA), and 224–245 (GRLE…EQME). The tract at residues 74-245 (LLMEDTMKEV…RLDVVREQME (172 aa)) is 8 X 22 AA approximate tandem repeats. Methionine 137 is modified (methionine sulfoxide). Serine 141 is subject to Phosphoserine. Positions 152–162 (HLRKMRKRLLR) are LDL and other lipoprotein receptors binding. Residue 156-159 (MRKR) participates in heparin binding. Residues 204 to 273 (SALTSQPLRE…GWFEPMVEDM (70 aa)) form a lipid-binding and lipoprotein association region. 219–226 (GERLRGRL) contributes to the heparin binding site. The segment at 261 to 273 (RLKGWFEPMVEDM) is specificity for association with VLDL.

The protein belongs to the apolipoprotein A1/A4/E family. As to quaternary structure, homotetramer. May interact with ABCA1; functionally associated with ABCA1 in the biogenesis of HDLs. May interact with APP/A4 amyloid-beta peptide; the interaction is extremely stable in vitro but its physiological significance is unclear. May interact with MAPT. May interact with MAP2. In the cerebrospinal fluid, interacts with secreted SORL1. Interacts with PMEL; this allows the loading of PMEL luminal fragment on ILVs to induce fibril nucleation. Post-translationally, APOE exists as multiple glycosylated and sialylated glycoforms within cells and in plasma. The extent of glycosylation and sialylation are tissue and context specific. Glycated in plasma VLDL. In terms of processing, phosphorylated by FAM20C in the extracellular medium.

It is found in the secreted. Its subcellular location is the extracellular space. The protein localises to the extracellular matrix. The protein resides in the extracellular vesicle. It localises to the endosome. It is found in the multivesicular body. APOE is an apolipoprotein, a protein associating with lipid particles, that mainly functions in lipoprotein-mediated lipid transport between organs via the plasma and interstitial fluids. APOE is a core component of plasma lipoproteins and is involved in their production, conversion and clearance. Apolipoproteins are amphipathic molecules that interact both with lipids of the lipoprotein particle core and the aqueous environment of the plasma. As such, APOE associates with chylomicrons, chylomicron remnants, very low density lipoproteins (VLDL) and intermediate density lipoproteins (IDL) but shows a preferential binding to high-density lipoproteins (HDL). It also binds a wide range of cellular receptors including the LDL receptor/LDLR, the LDL receptor-related proteins LRP1, LRP2 and LRP8 and the very low-density lipoprotein receptor/VLDLR that mediate the cellular uptake of the APOE-containing lipoprotein particles. Finally, APOE also has a heparin-binding activity and binds heparan-sulfate proteoglycans on the surface of cells, a property that supports the capture and the receptor-mediated uptake of APOE-containing lipoproteins by cells. A main function of APOE is to mediate lipoprotein clearance through the uptake of chylomicrons, VLDLs, and HDLs by hepatocytes. APOE is also involved in the biosynthesis by the liver of VLDLs as well as their uptake by peripheral tissues ensuring the delivery of triglycerides and energy storage in muscle, heart and adipose tissues. By participating in the lipoprotein-mediated distribution of lipids among tissues, APOE plays a critical role in plasma and tissues lipid homeostasis. APOE is also involved in two steps of reverse cholesterol transport, the HDLs-mediated transport of cholesterol from peripheral tissues to the liver, and thereby plays an important role in cholesterol homeostasis. First, it is functionally associated with ABCA1 in the biogenesis of HDLs in tissues. Second, it is enriched in circulating HDLs and mediates their uptake by hepatocytes. APOE also plays an important role in lipid transport in the central nervous system, regulating neuron survival and sprouting. The polypeptide is Apolipoprotein E (APOE) (Erethizon dorsatum (North American porcupine)).